A 112-amino-acid polypeptide reads, in one-letter code: Colipase (112 aa).

The signal sequence occupies residues 1–17; the sequence is MEKVLILLLVALAVAYA. A propeptide spans 18-22 (enterostatin, activation peptide); the sequence is VPDPR. Cystine bridges form between Cys-34–Cys-45, Cys-40–Cys-56, Cys-44–Cys-78, Cys-66–Cys-86, and Cys-80–Cys-104.

Belongs to the colipase family. In terms of assembly, forms a 1:1 stoichiometric complex with pancreatic lipase.

The protein localises to the secreted. Colipase is a cofactor of pancreatic lipase. It allows the lipase to anchor itself to the lipid-water interface. Without colipase the enzyme is washed off by bile salts, which have an inhibitory effect on the lipase. In terms of biological role, enterostatin has a biological activity as a satiety signal. The sequence is that of Colipase (CLPS) from Bos taurus (Bovine).